Consider the following 373-residue polypeptide: Queuine tRNA-ribosyltransferase (373 aa).

Aspartate 90 serves as the catalytic Proton acceptor. Residues 90 to 94 (DSGGF), aspartate 144, glutamine 193, and glycine 220 contribute to the substrate site. The interval 251–257 (GVGTPED) is RNA binding. The Nucleophile role is filled by aspartate 270. Residues 275–279 (TRNAR) form an RNA binding; important for wobble base 34 recognition region. Residues cysteine 308, cysteine 310, cysteine 313, and histidine 339 each contribute to the Zn(2+) site.

This sequence belongs to the queuine tRNA-ribosyltransferase family. Homodimer. Within each dimer, one monomer is responsible for RNA recognition and catalysis, while the other monomer binds to the replacement base PreQ1. Requires Zn(2+) as cofactor.

The enzyme catalyses 7-aminomethyl-7-carbaguanine + guanosine(34) in tRNA = 7-aminomethyl-7-carbaguanosine(34) in tRNA + guanine. Its pathway is tRNA modification; tRNA-queuosine biosynthesis. Functionally, catalyzes the base-exchange of a guanine (G) residue with the queuine precursor 7-aminomethyl-7-deazaguanine (PreQ1) at position 34 (anticodon wobble position) in tRNAs with GU(N) anticodons (tRNA-Asp, -Asn, -His and -Tyr). Catalysis occurs through a double-displacement mechanism. The nucleophile active site attacks the C1' of nucleotide 34 to detach the guanine base from the RNA, forming a covalent enzyme-RNA intermediate. The proton acceptor active site deprotonates the incoming PreQ1, allowing a nucleophilic attack on the C1' of the ribose to form the product. After dissociation, two additional enzymatic reactions on the tRNA convert PreQ1 to queuine (Q), resulting in the hypermodified nucleoside queuosine (7-(((4,5-cis-dihydroxy-2-cyclopenten-1-yl)amino)methyl)-7-deazaguanosine). This chain is Queuine tRNA-ribosyltransferase, found in Campylobacter jejuni (strain RM1221).